We begin with the raw amino-acid sequence, 273 residues long: Diphthine methyl ester synthase (273 aa).

S-adenosyl-L-methionine-binding positions include L10, D87, G90, S115 to I116, L166, V224, and H249.

It belongs to the diphthine synthase family.

It catalyses the reaction 2-[(3S)-amino-3-carboxypropyl]-L-histidyl-[translation elongation factor 2] + 4 S-adenosyl-L-methionine = diphthine methyl ester-[translation elongation factor 2] + 4 S-adenosyl-L-homocysteine + 3 H(+). It functions in the pathway protein modification; peptidyl-diphthamide biosynthesis. Its function is as follows. S-adenosyl-L-methionine-dependent methyltransferase that catalyzes four methylations of the modified target histidine residue in translation elongation factor 2 (EF-2), to form an intermediate called diphthine methyl ester. The four successive methylation reactions represent the second step of diphthamide biosynthesis. This chain is Diphthine methyl ester synthase (dph5), found in Dictyostelium discoideum (Social amoeba).